The primary structure comprises 422 residues: Elongation factor 1-alpha (422 aa).

The tr-type G domain occupies 5–221 (KPHQNLAVIG…NDLPEPQPPT (217 aa)). Residues 14–21 (GHVDHGKS) are G1. 14 to 21 (GHVDHGKS) is a binding site for GTP. S21 provides a ligand contact to Mg(2+). The interval 70-74 (GVTID) is G2. A G3 region spans residues 91–94 (DCPG). GTP-binding positions include 91–95 (DCPGH) and 146–149 (NKMD). Positions 146–149 (NKMD) are G4. The tract at residues 185-187 (SAF) is G5.

Belongs to the TRAFAC class translation factor GTPase superfamily. Classic translation factor GTPase family. EF-Tu/EF-1A subfamily.

The protein resides in the cytoplasm. The catalysed reaction is GTP + H2O = GDP + phosphate + H(+). In terms of biological role, GTP hydrolase that promotes the GTP-dependent binding of aminoacyl-tRNA to the A-site of ribosomes during protein biosynthesis. The polypeptide is Elongation factor 1-alpha (Natronomonas pharaonis (strain ATCC 35678 / DSM 2160 / CIP 103997 / JCM 8858 / NBRC 14720 / NCIMB 2260 / Gabara) (Halobacterium pharaonis)).